The following is a 120-amino-acid chain: ATP-dependent Clp protease adapter protein ClpS (120 aa).

Belongs to the ClpS family. As to quaternary structure, binds to the N-terminal domain of the chaperone ClpA.

In terms of biological role, involved in the modulation of the specificity of the ClpAP-mediated ATP-dependent protein degradation. In Pseudomonas syringae pv. syringae (strain B728a), this protein is ATP-dependent Clp protease adapter protein ClpS.